The chain runs to 225 residues: Protein-L-isoaspartate O-methyltransferase (225 aa).

The active site involves serine 75.

The protein belongs to the methyltransferase superfamily. L-isoaspartyl/D-aspartyl protein methyltransferase family.

It is found in the cytoplasm. It catalyses the reaction [protein]-L-isoaspartate + S-adenosyl-L-methionine = [protein]-L-isoaspartate alpha-methyl ester + S-adenosyl-L-homocysteine. Functionally, catalyzes the methyl esterification of L-isoaspartyl residues in peptides and proteins that result from spontaneous decomposition of normal L-aspartyl and L-asparaginyl residues. It plays a role in the repair and/or degradation of damaged proteins. The protein is Protein-L-isoaspartate O-methyltransferase of Xylella fastidiosa (strain M23).